Consider the following 188-residue polypeptide: tRNA(Phe) 7-((3-amino-3-carboxypropyl)-4-demethylwyosine(37)-N(4))-methyltransferase (188 aa).

This sequence belongs to the TYW3 family.

The catalysed reaction is 4-demethyl-7-[(3S)-3-amino-3-carboxypropyl]wyosine(37) in tRNA(Phe) + S-adenosyl-L-methionine = 7-[(3S)-3-amino-3-carboxypropyl]wyosine(37) in tRNA(Phe) + S-adenosyl-L-homocysteine + H(+). Functionally, S-adenosyl-L-methionine-dependent methyltransferase that acts as a component of the wyosine derivatives biosynthesis pathway. Probably methylates N-4 position of wybutosine-86 to produce wybutosine-72. The polypeptide is tRNA(Phe) 7-((3-amino-3-carboxypropyl)-4-demethylwyosine(37)-N(4))-methyltransferase (Aeropyrum pernix (strain ATCC 700893 / DSM 11879 / JCM 9820 / NBRC 100138 / K1)).